Reading from the N-terminus, the 571-residue chain is Cytochrome P450 monooxygenase g430 (571 aa).

A helical transmembrane segment spans residues 8–28 (GALIWVVTSYILYAIISNFII). Position 471 (cysteine 471) interacts with heme. The segment at 552-571 (CPLPAEAKLPKSRKPIGTAS) is disordered.

The protein belongs to the cytochrome P450 family. Heme serves as cofactor.

The protein localises to the membrane. Its pathway is mycotoxin biosynthesis. In terms of biological role, cytochrome P450 monooxygenase; part of the gene cluster that mediates the biosynthesis of 1233A, a natural compound known as an inhibitor of HMG-CoA synthase in the mevalonate pathway and with antibacterial and antifungal activities. The highly reducing polyketide synthase g433 is responsible for the 1233A backbone biosynthesis and the cytochrome P450 monooxygenase g430 catalyzes oxidation of the backbone. The chain is Cytochrome P450 monooxygenase g430 from Fusarium sp.